Here is a 289-residue protein sequence, read N- to C-terminus: Acetyl-coenzyme A carboxylase carboxyl transferase subunit beta (289 aa).

A CoA carboxyltransferase N-terminal domain is found at 28–289 (VMTKCPECKK…QGGGMAVWQS (262 aa)). 4 residues coordinate Zn(2+): Cys32, Cys35, Cys51, and Cys54. Residues 32 to 54 (CPECKKIMYTKELLKNLKVCVNC) form a C4-type zinc finger.

Belongs to the AccD/PCCB family. As to quaternary structure, acetyl-CoA carboxylase is a heterohexamer composed of biotin carboxyl carrier protein (AccB), biotin carboxylase (AccC) and two subunits each of ACCase subunit alpha (AccA) and ACCase subunit beta (AccD). The cofactor is Zn(2+).

The protein resides in the cytoplasm. It carries out the reaction N(6)-carboxybiotinyl-L-lysyl-[protein] + acetyl-CoA = N(6)-biotinyl-L-lysyl-[protein] + malonyl-CoA. It functions in the pathway lipid metabolism; malonyl-CoA biosynthesis; malonyl-CoA from acetyl-CoA: step 1/1. Functionally, component of the acetyl coenzyme A carboxylase (ACC) complex. Biotin carboxylase (BC) catalyzes the carboxylation of biotin on its carrier protein (BCCP) and then the CO(2) group is transferred by the transcarboxylase to acetyl-CoA to form malonyl-CoA. The polypeptide is Acetyl-coenzyme A carboxylase carboxyl transferase subunit beta (Bacillus cereus (strain G9842)).